We begin with the raw amino-acid sequence, 350 residues long: Outer membrane porin PhoE (350 aa).

Residues 1–20 (MNKSTLAIVVSIIASASVHA) form the signal peptide.

This sequence belongs to the Gram-negative porin family. In terms of assembly, homotrimer.

The protein resides in the cell outer membrane. Functionally, uptake of inorganic phosphate, phosphorylated compounds, and some other negatively charged solutes. The protein is Outer membrane porin PhoE (phoE) of Salmonella typhimurium (strain LT2 / SGSC1412 / ATCC 700720).